The chain runs to 305 residues: U6 small nuclear RNA (adenine-(43)-N(6))-methyltransferase (305 aa).

S-adenosyl-L-methionine-binding residues include Arg-87, Gly-112, Glu-135, Thr-166, and Asn-188. Residues 197–221 (PNPLGGNTRNPERRPAPNNARTGSQ) form a disordered region.

Belongs to the methyltransferase superfamily. METTL16/RlmF family.

The catalysed reaction is adenosine in U6 snRNA + S-adenosyl-L-methionine = N(6)-methyladenosine in U6 snRNA + S-adenosyl-L-homocysteine + H(+). Functionally, RNA N6-methyltransferase that mediates N6-methylation of adenine of U6 small nuclear RNA (U6 snRNA). This is U6 small nuclear RNA (adenine-(43)-N(6))-methyltransferase from Drosophila melanogaster (Fruit fly).